The chain runs to 1320 residues: Centrosomin (1320 aa).

Residues Ala20 to Ser41 form a disordered region. Positions Arg97 to Leu516 form a coiled coil. Residues Asn517–Cys530 are compositionally biased toward basic and acidic residues. The interval Asn517 to Met554 is disordered. Residues Ile535–Met554 show a composition bias toward polar residues. Residue Ser545 is modified to Phosphoserine. Coiled coils occupy residues Glu626 to Val654 and Asn712 to Ala983. The Nuclear localization signal signature appears at Arg644–Phe656. At Thr782 the chain carries Phosphothreonine. At Ser785 the chain carries Phosphoserine. Residues Lys810–Arg823 show a composition bias toward basic and acidic residues. 2 disordered regions span residues Lys810–Asp849 and Ser863–Ser893. Over residues Leu831 to Glu843 the composition is skewed to polar residues. Residues Ser874, Ser876, Ser878, Ser1191, Ser1234, Ser1237, and Ser1239 each carry the phosphoserine modification. The disordered stretch occupies residues Val1220 to Gly1249. Over residues Ser1237–Ala1247 the composition is skewed to polar residues.

In terms of assembly, monomer. Developing visceral mesoderm of the midgut, the central and peripheral nervous system, and developing gonads. Isoform J: Expressed in ovaries, testis and embryos. Isoform A: Expressed in testis only.

The protein localises to the cytoplasm. The protein resides in the cytoskeleton. It localises to the microtubule organizing center. Its subcellular location is the centrosome. It is found in the flagellum basal body. The protein localises to the perinuclear region. Core component of the centrosome throughout spermatogenesis. May participate in mitotic spindle assembly and the mechanics of morphogenesis through an interaction with microtubules, either directly or indirectly. Is a target of several homeotic genes. This Drosophila melanogaster (Fruit fly) protein is Centrosomin (cnn).